The sequence spans 234 residues: Glucosamine-6-phosphate deaminase (234 aa).

Catalysis depends on Asp63, which acts as the Proton acceptor; for enolization step. The active-site For ring-opening step is the Asn129. Residue His131 is the Proton acceptor; for ring-opening step of the active site. Glu136 serves as the catalytic For ring-opening step.

The protein belongs to the glucosamine/galactosamine-6-phosphate isomerase family. NagB subfamily.

It catalyses the reaction alpha-D-glucosamine 6-phosphate + H2O = beta-D-fructose 6-phosphate + NH4(+). The protein operates within amino-sugar metabolism; N-acetylneuraminate degradation; D-fructose 6-phosphate from N-acetylneuraminate: step 5/5. Functionally, catalyzes the reversible isomerization-deamination of glucosamine 6-phosphate (GlcN6P) to form fructose 6-phosphate (Fru6P) and ammonium ion. The polypeptide is Glucosamine-6-phosphate deaminase (Listeria welshimeri serovar 6b (strain ATCC 35897 / DSM 20650 / CCUG 15529 / CIP 8149 / NCTC 11857 / SLCC 5334 / V8)).